The chain runs to 497 residues: Probable cytosol aminopeptidase (497 aa).

Mn(2+) contacts are provided by lysine 267 and aspartate 272. Residue lysine 279 is part of the active site. Mn(2+) contacts are provided by aspartate 290, aspartate 349, and glutamate 351. Arginine 353 is an active-site residue.

The protein belongs to the peptidase M17 family. Mn(2+) is required as a cofactor.

The protein localises to the cytoplasm. It carries out the reaction Release of an N-terminal amino acid, Xaa-|-Yaa-, in which Xaa is preferably Leu, but may be other amino acids including Pro although not Arg or Lys, and Yaa may be Pro. Amino acid amides and methyl esters are also readily hydrolyzed, but rates on arylamides are exceedingly low.. The enzyme catalyses Release of an N-terminal amino acid, preferentially leucine, but not glutamic or aspartic acids.. Presumably involved in the processing and regular turnover of intracellular proteins. Catalyzes the removal of unsubstituted N-terminal amino acids from various peptides. The protein is Probable cytosol aminopeptidase of Nitrosomonas europaea (strain ATCC 19718 / CIP 103999 / KCTC 2705 / NBRC 14298).